The sequence spans 257 residues: MADNQEGRPYFPLDEGSIIEGVSDQVIVVVLLSFVAVGSLLYLLLRNDEQNIHPENQDRVRAVREQLQNEQETPPPPRPQFYSDMTCPVCLQQATFPVETNCGHLFCGSCIIAYWRYGSWLGAINCPICRQTVTLIFPLFQATEQEDSQNILREAIGYNRRFSGQPRSLMDRIMDLPTLLRHAFREMFSVGGLFWMFRIRIVLCLLGALFYLVSPLDIIPEAVFGLLGFLDDFFVLFLLLIYISIMYREVVTQRLYR.

The Lumenal portion of the chain corresponds to 1-24; the sequence is MADNQEGRPYFPLDEGSIIEGVSD. Residues 25 to 45 traverse the membrane as a helical segment; sequence QVIVVVLLSFVAVGSLLYLLL. Over 46-200 the chain is Cytoplasmic; the sequence is RNDEQNIHPE…GGLFWMFRIR (155 aa). The RING-type zinc-finger motif lies at 87-130; it reads CPVCLQQATFPVETNCGHLFCGSCIIAYWRYGSWLGAINCPICR. The helical transmembrane segment at 201–221 threads the bilayer; that stretch reads IVLCLLGALFYLVSPLDIIPE. Position 222 (A222) is a topological domain, lumenal. The chain crosses the membrane as a helical span at residues 223–243; it reads VFGLLGFLDDFFVLFLLLIYI. Residues 244 to 257 are Cytoplasmic-facing; that stretch reads SIMYREVVTQRLYR.

Its subcellular location is the endoplasmic reticulum membrane. The catalysed reaction is S-ubiquitinyl-[E2 ubiquitin-conjugating enzyme]-L-cysteine + [acceptor protein]-L-lysine = [E2 ubiquitin-conjugating enzyme]-L-cysteine + N(6)-ubiquitinyl-[acceptor protein]-L-lysine.. Its pathway is protein modification; protein ubiquitination. Its function is as follows. E3 ubiquitin-protein ligase that plays an essential role in stimulus-induced inositol 1,4,5-trisphosphate receptor (ITPR) ubiquitination and degradation via the endoplasmic reticulum-associated degradation (ERAD) pathway. Also involved in ITPR turnover in resting cells. This chain is E3 ubiquitin-protein ligase RNF170 (rnf170), found in Xenopus tropicalis (Western clawed frog).